Consider the following 523-residue polypeptide: AarF domain-containing protein kinase 1 (523 aa).

A Protein kinase domain is found at 148–484 (EFEEKPLGAA…SLWSYIHISL (337 aa)). ATP contacts are provided by residues 154 to 162 (LGAASLAQV) and lysine 176. Aspartate 308 acts as the Proton acceptor in catalysis.

The protein belongs to the protein kinase superfamily. ADCK protein kinase family.

It localises to the mitochondrion. Its function is as follows. Appears to be essential for maintaining mitochondrial cristae formation and mitochondrial function by acting via YME1L1 in a kinase-independent manner to regulate essential mitochondrial structural proteins OPA1 and IMMT. The action of this enzyme is not yet clear. It is not known if it has protein kinase activity and what type of substrate it would phosphorylate (Ser, Thr or Tyr). This is AarF domain-containing protein kinase 1 (adck1) from Xenopus tropicalis (Western clawed frog).